The sequence spans 179 residues: Alkyl hydroperoxide reductase AhpD (179 aa).

Cysteine 130 (proton donor) is an active-site residue. The cysteines at positions 130 and 133 are disulfide-linked. Cysteine 133 functions as the Cysteine sulfenic acid (-SOH) intermediate in the catalytic mechanism.

Belongs to the AhpD family. As to quaternary structure, homotrimer.

It carries out the reaction N(6)-[(R)-dihydrolipoyl]-L-lysyl-[lipoyl-carrier protein] + a hydroperoxide = N(6)-[(R)-lipoyl]-L-lysyl-[lipoyl-carrier protein] + an alcohol + H2O. Antioxidant protein with alkyl hydroperoxidase activity. Required for the reduction of the AhpC active site cysteine residues and for the regeneration of the AhpC enzyme activity. This chain is Alkyl hydroperoxide reductase AhpD, found in Nocardia farcinica (strain IFM 10152).